Consider the following 122-residue polypeptide: Large ribosomal subunit protein uL14 (122 aa).

It belongs to the universal ribosomal protein uL14 family. In terms of assembly, part of the 50S ribosomal subunit. Forms a cluster with proteins L3 and L19. In the 70S ribosome, L14 and L19 interact and together make contacts with the 16S rRNA in bridges B5 and B8.

Its function is as follows. Binds to 23S rRNA. Forms part of two intersubunit bridges in the 70S ribosome. The chain is Large ribosomal subunit protein uL14 from Gloeothece citriformis (strain PCC 7424) (Cyanothece sp. (strain PCC 7424)).